A 279-amino-acid polypeptide reads, in one-letter code: Large ribosomal subunit protein uL2 (279 aa).

Residues 223-279 (VAMNPVDHPMGGGEGRSSGGHPRSRKGLYAKGGKTRSANKYSKNMIVKKRVNKRLSK) are disordered. A compositionally biased stretch (basic residues) spans 268–279 (IVKKRVNKRLSK).

Belongs to the universal ribosomal protein uL2 family. Part of the 50S ribosomal subunit. Forms a bridge to the 30S subunit in the 70S ribosome.

In terms of biological role, one of the primary rRNA binding proteins. Required for association of the 30S and 50S subunits to form the 70S ribosome, for tRNA binding and peptide bond formation. It has been suggested to have peptidyltransferase activity; this is somewhat controversial. Makes several contacts with the 16S rRNA in the 70S ribosome. The polypeptide is Large ribosomal subunit protein uL2 (Cytophaga hutchinsonii (strain ATCC 33406 / DSM 1761 / CIP 103989 / NBRC 15051 / NCIMB 9469 / D465)).